The sequence spans 212 residues: Probable GTP-binding protein EngB (212 aa).

Residues 38–210 (SLPEIAFVGK…KASLAKCIKP (173 aa)) enclose the EngB-type G domain. Residues 46–53 (GKSNVGKS), 73–77 (GRTRQ), 91–94 (DLPG), 158–161 (TKSD), and 189–191 (VSS) contribute to the GTP site. Serine 53 and threonine 75 together coordinate Mg(2+).

This sequence belongs to the TRAFAC class TrmE-Era-EngA-EngB-Septin-like GTPase superfamily. EngB GTPase family. It depends on Mg(2+) as a cofactor.

Functionally, necessary for normal cell division and for the maintenance of normal septation. The polypeptide is Probable GTP-binding protein EngB (Rickettsia felis (strain ATCC VR-1525 / URRWXCal2) (Rickettsia azadi)).